A 138-amino-acid chain; its full sequence is Ribosome-binding factor A (138 aa).

The protein belongs to the RbfA family. Monomer. Binds 30S ribosomal subunits, but not 50S ribosomal subunits or 70S ribosomes.

It localises to the cytoplasm. One of several proteins that assist in the late maturation steps of the functional core of the 30S ribosomal subunit. Associates with free 30S ribosomal subunits (but not with 30S subunits that are part of 70S ribosomes or polysomes). Required for efficient processing of 16S rRNA. May interact with the 5'-terminal helix region of 16S rRNA. This is Ribosome-binding factor A from Bradyrhizobium sp. (strain BTAi1 / ATCC BAA-1182).